We begin with the raw amino-acid sequence, 256 residues long: Thiazole synthase (256 aa).

The active-site Schiff-base intermediate with DXP is Lys95. 1-deoxy-D-xylulose 5-phosphate contacts are provided by residues Gly156, 182 to 183 (AG), and 204 to 205 (NT).

It belongs to the ThiG family. In terms of assembly, homotetramer. Forms heterodimers with either ThiH or ThiS.

It is found in the cytoplasm. It carries out the reaction [ThiS sulfur-carrier protein]-C-terminal-Gly-aminoethanethioate + 2-iminoacetate + 1-deoxy-D-xylulose 5-phosphate = [ThiS sulfur-carrier protein]-C-terminal Gly-Gly + 2-[(2R,5Z)-2-carboxy-4-methylthiazol-5(2H)-ylidene]ethyl phosphate + 2 H2O + H(+). The protein operates within cofactor biosynthesis; thiamine diphosphate biosynthesis. Functionally, catalyzes the rearrangement of 1-deoxy-D-xylulose 5-phosphate (DXP) to produce the thiazole phosphate moiety of thiamine. Sulfur is provided by the thiocarboxylate moiety of the carrier protein ThiS. In vitro, sulfur can be provided by H(2)S. In Escherichia coli O17:K52:H18 (strain UMN026 / ExPEC), this protein is Thiazole synthase.